The chain runs to 534 residues: Probable protein kinase UbiB (534 aa).

The chain crosses the membrane as a helical span at residues 23–43 (DLLFDLPLPWFLLALRYVLPW). In terms of domain architecture, Protein kinase spans 125 to 492 (RFDVEPLASA…WKKRKDDWFL (368 aa)). ATP is bound by residues 131-139 (LASASVAQV) and Lys153. Asp288 functions as the Proton acceptor in the catalytic mechanism. 2 consecutive transmembrane segments (helical) span residues 490-510 (WFLR…AAGG) and 512-532 (LHEL…YLVV).

This sequence belongs to the ABC1 family. UbiB subfamily.

The protein localises to the cell inner membrane. It participates in cofactor biosynthesis; ubiquinone biosynthesis [regulation]. In terms of biological role, is probably a protein kinase regulator of UbiI activity which is involved in aerobic coenzyme Q (ubiquinone) biosynthesis. This Pseudomonas fluorescens (strain Pf0-1) protein is Probable protein kinase UbiB.